A 188-amino-acid chain; its full sequence is MATYYSNDFRAGLKIMLDGEPYAVEASEFVKPGKGQAFARVKLRRLLTGTRVEKTFKSTDSAEGADVVDMNLTYLYNDGEFWHFMNNETFEQLSADAKAIGDNAKWLLDQAECIVTLWNGQPIAVTPPNFVELEIIETDPGLKGDTAGTGGKPATLSTGAVVKVPLFVQIGEVIKVDTRSGEYVSRVK.

Lysine 34 bears the N6-(3,6-diaminohexanoyl)-5-hydroxylysine mark.

This sequence belongs to the elongation factor P family. May be beta-lysylated on the epsilon-amino group of Lys-34 by the combined action of EpmA and EpmB, and then hydroxylated on the C5 position of the same residue by EpmC (if this protein is present). Lysylation is critical for the stimulatory effect of EF-P on peptide-bond formation. The lysylation moiety may extend toward the peptidyltransferase center and stabilize the terminal 3-CCA end of the tRNA. Hydroxylation of the C5 position on Lys-34 may allow additional potential stabilizing hydrogen-bond interactions with the P-tRNA.

Its subcellular location is the cytoplasm. It functions in the pathway protein biosynthesis; polypeptide chain elongation. Functionally, involved in peptide bond synthesis. Alleviates ribosome stalling that occurs when 3 or more consecutive Pro residues or the sequence PPG is present in a protein, possibly by augmenting the peptidyl transferase activity of the ribosome. Modification of Lys-34 is required for alleviation. The polypeptide is Elongation factor P (Klebsiella pneumoniae (strain 342)).